Here is a 408-residue protein sequence, read N- to C-terminus: Lysosome-associated membrane glycoprotein 3 (408 aa).

The N-terminal stretch at 1–20 is a signal peptide; it reads MPGQTSAVAVLLCLAVILHG. At 21 to 373 the chain is on the lumenal side; it reads YQIREKEFPE…IVDECLSDYT (353 aa). N-linked (GlcNAc...) asparagine glycans are attached at residues N55 and N225. C230 and C267 are oxidised to a cystine. Residue N284 is glycosylated (N-linked (GlcNAc...) asparagine). An intrachain disulfide couples C331 to C368. A helical membrane pass occupies residues 374–394; that stretch reads VVLPVVGIIVVVLCVVGLGIY. The Cytoplasmic portion of the chain corresponds to 395 to 408; sequence KIRQRRQSSAYQRI.

Belongs to the LAMP family. Monomer. Interacts with FURIN.

The protein localises to the cell surface. The protein resides in the lysosome membrane. It localises to the cytoplasmic vesicle membrane. It is found in the early endosome membrane. Its function is as follows. Lysosomal membrane glycoprotein which plays a role in the unfolded protein response (UPR) that contributes to protein degradation and cell survival during proteasomal dysfunction. Plays a role in the process of fusion of the lysosome with the autophagosome, thereby modulating the autophagic process. Promotes hepatocellular lipogenesis through activation of the PI3K/Akt pathway. May also play a role in dendritic cell function and in adaptive immunity. This is Lysosome-associated membrane glycoprotein 3 (Lamp3) from Rattus norvegicus (Rat).